The primary structure comprises 348 residues: Phosphate acyltransferase (348 aa).

Belongs to the PlsX family. In terms of assembly, homodimer. Probably interacts with PlsY.

It is found in the cytoplasm. It carries out the reaction a fatty acyl-[ACP] + phosphate = an acyl phosphate + holo-[ACP]. It participates in lipid metabolism; phospholipid metabolism. Functionally, catalyzes the reversible formation of acyl-phosphate (acyl-PO(4)) from acyl-[acyl-carrier-protein] (acyl-ACP). This enzyme utilizes acyl-ACP as fatty acyl donor, but not acyl-CoA. This chain is Phosphate acyltransferase, found in Oenococcus oeni (strain ATCC BAA-331 / PSU-1).